The primary structure comprises 400 residues: S-adenosylmethionine synthase (400 aa).

136-141 (GQGSVD) lines the ATP pocket.

The protein belongs to the AdoMet synthase 2 family. The cofactor is Mg(2+).

It catalyses the reaction L-methionine + ATP + H2O = S-adenosyl-L-methionine + phosphate + diphosphate. Its pathway is amino-acid biosynthesis; S-adenosyl-L-methionine biosynthesis; S-adenosyl-L-methionine from L-methionine: step 1/1. Catalyzes the formation of S-adenosylmethionine from methionine and ATP. The polypeptide is S-adenosylmethionine synthase (Thermoplasma volcanium (strain ATCC 51530 / DSM 4299 / JCM 9571 / NBRC 15438 / GSS1)).